We begin with the raw amino-acid sequence, 421 residues long: Phosphoribosylamine--glycine ligase (421 aa).

The ATP-grasp domain maps to 108 to 314 (KEIMVKYNVP…FAQNIDDIMM (207 aa)). 134–195 (IEEQGAPIVV…EEFLDGEEFS (62 aa)) contacts ATP. Glutamate 284 and asparagine 286 together coordinate Mg(2+).

It belongs to the GARS family. Mg(2+) is required as a cofactor. The cofactor is Mn(2+).

It carries out the reaction 5-phospho-beta-D-ribosylamine + glycine + ATP = N(1)-(5-phospho-beta-D-ribosyl)glycinamide + ADP + phosphate + H(+). The protein operates within purine metabolism; IMP biosynthesis via de novo pathway; N(1)-(5-phospho-D-ribosyl)glycinamide from 5-phospho-alpha-D-ribose 1-diphosphate: step 2/2. This chain is Phosphoribosylamine--glycine ligase, found in Streptococcus pyogenes serotype M1.